Reading from the N-terminus, the 171-residue chain is Zinc uptake regulation protein (171 aa).

It belongs to the Fur family.

In terms of biological role, acts as a negative controlling element, employing Zn(2+) as a cofactor to bind the operator of the repressed genes (znuACB). This Escherichia coli (strain K12) protein is Zinc uptake regulation protein (zur).